The following is a 313-amino-acid chain: Secreted mono- and diacylglycerol lipase MDL5 (313 aa).

The signal sequence occupies residues 1-20; that stretch reads MQLQYVLTLLWIIFAQNVFS. Cysteines 66 and 306 form a disulfide. Asparagine 72 and asparagine 111 each carry an N-linked (GlcNAc...) asparagine glycan. Serine 180 acts as the Nucleophile in catalysis. Aspartate 238 is an active-site residue. The N-linked (GlcNAc...) asparagine glycan is linked to asparagine 263. Histidine 290 is a catalytic residue.

Belongs to the AB hydrolase superfamily. Lipase family. Class 3 subfamily.

It localises to the secreted. It is found in the cell wall. It carries out the reaction a monoacylglycerol + H2O = glycerol + a fatty acid + H(+). The enzyme catalyses a diacylglycerol + H2O = a monoacylglycerol + a fatty acid + H(+). Its function is as follows. Secreted lipase involved in Dandruff and seborrheic dermatitis (D/SD) probably via lipase-mediated breakdown of sebaceous lipids and release of irritating free fatty acids. Shows activity against monoglyceride and diglyceride substrates, but not triglyceride substrates and does not exhibit regio-selective production of diacylglycerols. Cleaves oleic acid from 1,2 isomers of diolein on both the 1 and the 2 position of the glycerol backbone, resulting mainly in free fatty acids but no monoolein is detected. Shows activity on monoolein and liberates mostly free fatty acids, but can also perform the reverse reaction and produce diolein. The polypeptide is Secreted mono- and diacylglycerol lipase MDL5 (Malassezia globosa (strain ATCC MYA-4612 / CBS 7966) (Dandruff-associated fungus)).